The primary structure comprises 352 residues: MTAILERRENSSLWARFCEWITSTENRLYIGWFGVIMIPCLLTATSVFIIAFIAAPPVDIDGIREPVSGSLLYGNNIITGAVIPTSNAIGLHFYPIWEAASLDEWLYNGGPYQLIVCHFLLGVYCYMGREWELSFRLGMRPWIAVAYSAPVAAASAVFLVYPIGQGSFSDGMPLGISGTFNFMIVFQAEHNILMHPFHMLGVAGVFGGSLFSAMHGSLVTSSLIRETTENESANEGYRFGQEEETYNIVAAHGYFGRLIFQYASFNNSRSLHFFLAAWPVIGIWFTALGLSTMAFNLNGFNFNQSVVDSQGRVLNTWADIINRANLGMEVMHERNAHNFPLDLASTNSSSNN.

Thr-2 is subject to N-acetylthreonine. Thr-2 carries the post-translational modification Phosphothreonine. 3 helical membrane-spanning segments follow: residues 29–46 (YIGWFGVIMIPCLLTATS), 118–133 (HFLLGVYCYMGREWEL), and 142–156 (WIAVAYSAPVAAASA). Chlorophyll a is bound at residue His-118. Position 126 (Tyr-126) interacts with pheophytin a. Positions 170 and 189 each coordinate [CaMn4O5] cluster. Residues 197–218 (FHMLGVAGVFGGSLFSAMHGSL) form a helical membrane-spanning segment. His-198 provides a ligand contact to chlorophyll a. A quinone is bound by residues His-215 and 264–265 (SF). His-215 serves as a coordination point for Fe cation. Residue His-272 participates in Fe cation binding. The chain crosses the membrane as a helical span at residues 274–288 (FLAAWPVIGIWFTAL). Positions 332, 333, 342, and 344 each coordinate [CaMn4O5] cluster. A propeptide spanning residues 345–352 (STNSSSNN) is cleaved from the precursor.

Belongs to the reaction center PufL/M/PsbA/D family. As to quaternary structure, PSII is composed of 1 copy each of membrane proteins PsbA, PsbB, PsbC, PsbD, PsbE, PsbF, PsbH, PsbI, PsbJ, PsbK, PsbL, PsbM, PsbT, PsbX, PsbY, PsbZ, Psb30/Ycf12, at least 3 peripheral proteins of the oxygen-evolving complex and a large number of cofactors. It forms dimeric complexes. It depends on The D1/D2 heterodimer binds P680, chlorophylls that are the primary electron donor of PSII, and subsequent electron acceptors. It shares a non-heme iron and each subunit binds pheophytin, quinone, additional chlorophylls, carotenoids and lipids. D1 provides most of the ligands for the Mn4-Ca-O5 cluster of the oxygen-evolving complex (OEC). There is also a Cl(-1) ion associated with D1 and D2, which is required for oxygen evolution. The PSII complex binds additional chlorophylls, carotenoids and specific lipids. as a cofactor. In terms of processing, tyr-161 forms a radical intermediate that is referred to as redox-active TyrZ, YZ or Y-Z. C-terminally processed by CTPA; processing is essential to allow assembly of the oxygen-evolving complex and thus photosynthetic growth.

It localises to the plastid. The protein resides in the chloroplast thylakoid membrane. It catalyses the reaction 2 a plastoquinone + 4 hnu + 2 H2O = 2 a plastoquinol + O2. Functionally, this is one of the two reaction center proteins of photosystem II. Its function is as follows. Photosystem II (PSII) is a light-driven water:plastoquinone oxidoreductase that uses light energy to abstract electrons from H(2)O, generating O(2) and a proton gradient subsequently used for ATP formation. It consists of a core antenna complex that captures photons, and an electron transfer chain that converts photonic excitation into a charge separation. The D1/D2 (PsbA/PsbD) reaction center heterodimer binds P680, the primary electron donor of PSII as well as several subsequent electron acceptors. The polypeptide is Photosystem II protein D1 (Chlamydomonas reinhardtii (Chlamydomonas smithii)).